Reading from the N-terminus, the 353-residue chain is Photosystem II D2 protein (353 aa).

Residue Thr2 is modified to N-acetylthreonine. Thr2 carries the post-translational modification Phosphothreonine. A helical transmembrane segment spans residues 41–61 (CAYFALGGWFTGTTFVTSWYT). His118 provides a ligand contact to chlorophyll a. Residues 125 to 141 (GFMLRQFELARSVQLRP) form a helical membrane-spanning segment. Gln130 and Asn143 together coordinate pheophytin a. A helical membrane pass occupies residues 153 to 166 (VFVSVFLIYPLGQS). His198 is a chlorophyll a binding site. Residues 208–228 (AALLCAIHGATVENTLFEDGD) form a helical membrane-spanning segment. A plastoquinone is bound by residues His215 and Phe262. A Fe cation-binding site is contributed by His215. His269 is a binding site for Fe cation. The chain crosses the membrane as a helical span at residues 279 to 295 (GLWMSALGVVGLALNLR).

It belongs to the reaction center PufL/M/PsbA/D family. In terms of assembly, PSII is composed of 1 copy each of membrane proteins PsbA, PsbB, PsbC, PsbD, PsbE, PsbF, PsbH, PsbI, PsbJ, PsbK, PsbL, PsbM, PsbT, PsbX, PsbY, PsbZ, Psb30/Ycf12, at least 3 peripheral proteins of the oxygen-evolving complex and a large number of cofactors. It forms dimeric complexes. The D1/D2 heterodimer binds P680, chlorophylls that are the primary electron donor of PSII, and subsequent electron acceptors. It shares a non-heme iron and each subunit binds pheophytin, quinone, additional chlorophylls, carotenoids and lipids. There is also a Cl(-1) ion associated with D1 and D2, which is required for oxygen evolution. The PSII complex binds additional chlorophylls, carotenoids and specific lipids. serves as cofactor.

The protein localises to the plastid. Its subcellular location is the chloroplast thylakoid membrane. The catalysed reaction is 2 a plastoquinone + 4 hnu + 2 H2O = 2 a plastoquinol + O2. Its function is as follows. Photosystem II (PSII) is a light-driven water:plastoquinone oxidoreductase that uses light energy to abstract electrons from H(2)O, generating O(2) and a proton gradient subsequently used for ATP formation. It consists of a core antenna complex that captures photons, and an electron transfer chain that converts photonic excitation into a charge separation. The D1/D2 (PsbA/PsbD) reaction center heterodimer binds P680, the primary electron donor of PSII as well as several subsequent electron acceptors. D2 is needed for assembly of a stable PSII complex. This is Photosystem II D2 protein from Nymphaea alba (White water-lily).